A 330-amino-acid polypeptide reads, in one-letter code: GTPase Obg (330 aa).

Residues 1–159 (MNFIDEVKIC…MWIHLSLKLL (159 aa)) enclose the Obg domain. Positions 160 to 327 (SDVGLVGLPN…IVKLALKTIK (168 aa)) constitute an OBG-type G domain. Residues 166-173 (GLPNAGKS), 191-195 (FTTLV), 212-215 (DIPG), 279-282 (NKCD), and 308-310 (STY) each bind GTP. Mg(2+) contacts are provided by Ser-173 and Thr-193.

The protein belongs to the TRAFAC class OBG-HflX-like GTPase superfamily. OBG GTPase family. Monomer. The cofactor is Mg(2+).

The protein localises to the cytoplasm. Its function is as follows. An essential GTPase which binds GTP, GDP and possibly (p)ppGpp with moderate affinity, with high nucleotide exchange rates and a fairly low GTP hydrolysis rate. Plays a role in control of the cell cycle, stress response, ribosome biogenesis and in those bacteria that undergo differentiation, in morphogenesis control. This is GTPase Obg from Rickettsia felis (strain ATCC VR-1525 / URRWXCal2) (Rickettsia azadi).